A 369-amino-acid polypeptide reads, in one-letter code: 4-hydroxy-3-methylbut-2-en-1-yl diphosphate synthase (flavodoxin) (369 aa).

Residues cysteine 270, cysteine 273, cysteine 305, and glutamate 312 each coordinate [4Fe-4S] cluster.

The protein belongs to the IspG family. [4Fe-4S] cluster is required as a cofactor.

It catalyses the reaction (2E)-4-hydroxy-3-methylbut-2-enyl diphosphate + oxidized [flavodoxin] + H2O + 2 H(+) = 2-C-methyl-D-erythritol 2,4-cyclic diphosphate + reduced [flavodoxin]. Its pathway is isoprenoid biosynthesis; isopentenyl diphosphate biosynthesis via DXP pathway; isopentenyl diphosphate from 1-deoxy-D-xylulose 5-phosphate: step 5/6. Converts 2C-methyl-D-erythritol 2,4-cyclodiphosphate (ME-2,4cPP) into 1-hydroxy-2-methyl-2-(E)-butenyl 4-diphosphate. The sequence is that of 4-hydroxy-3-methylbut-2-en-1-yl diphosphate synthase (flavodoxin) from Pseudomonas syringae pv. syringae (strain B728a).